A 135-amino-acid chain; its full sequence is uncharacterized protein (135 aa).

One can recognise an HTH merR-type domain in the interval 2-71; the sequence is TYTTAKAAEK…LKDIKRFAEC (70 aa). The segment at residues 5–24 is a DNA-binding region (H-T-H motif); sequence TAKAAEKIGISAYTLRFYDK.

This is an uncharacterized protein from Haemophilus influenzae (strain ATCC 51907 / DSM 11121 / KW20 / Rd).